The sequence spans 540 residues: ADP,ATP carrier protein 2 (540 aa).

The next 11 membrane-spanning stretches (helical) occupy residues 24–44 (FSKF…YCLL), 62–82 (VIPF…TMVY), 94–114 (VFYC…VIIY), 151–171 (IYYV…FWGL), 223–243 (SVML…IWLY), 295–315 (LLGL…FEVV), 337–357 (ITTL…GQCI), 367–387 (LVTP…IFAA), 391–411 (ISIF…WTGG), 458–478 (SGGS…AASL), and 480–500 (VIAL…AYIG).

This sequence belongs to the ADP/ATP translocase tlc family.

Its subcellular location is the cell membrane. In Chlamydia pneumoniae (Chlamydophila pneumoniae), this protein is ADP,ATP carrier protein 2 (tlcB).